A 156-amino-acid chain; its full sequence is ATP synthase subunit b (156 aa).

A helical transmembrane segment spans residues 7–29; that stretch reads LFAQMVVFLVLAWFTMKFVWPPL.

This sequence belongs to the ATPase B chain family. In terms of assembly, F-type ATPases have 2 components, F(1) - the catalytic core - and F(0) - the membrane proton channel. F(1) has five subunits: alpha(3), beta(3), gamma(1), delta(1), epsilon(1). F(0) has three main subunits: a(1), b(2) and c(10-14). The alpha and beta chains form an alternating ring which encloses part of the gamma chain. F(1) is attached to F(0) by a central stalk formed by the gamma and epsilon chains, while a peripheral stalk is formed by the delta and b chains.

Its subcellular location is the cell inner membrane. In terms of biological role, f(1)F(0) ATP synthase produces ATP from ADP in the presence of a proton or sodium gradient. F-type ATPases consist of two structural domains, F(1) containing the extramembraneous catalytic core and F(0) containing the membrane proton channel, linked together by a central stalk and a peripheral stalk. During catalysis, ATP synthesis in the catalytic domain of F(1) is coupled via a rotary mechanism of the central stalk subunits to proton translocation. Functionally, component of the F(0) channel, it forms part of the peripheral stalk, linking F(1) to F(0). This Burkholderia multivorans (strain ATCC 17616 / 249) protein is ATP synthase subunit b.